Consider the following 378-residue polypeptide: MDSIGDNVTEMDAFVRDLTMKPYAELEKRKAELHAQKLKLVQKRQQLLRDNYNVLVDYARNQDAFYQLLENSRHDFKELVLHTNQLYEPVKRSQNFLTSISEHYRDAKLMHQVQPQLSSILELPELMNACIERNYFSETLEFQALAYRLKDRFGTNSIIQELITQVETLVVKLTEKLILQLQKPLKLYSLIKVVTYLRVTAKLSEAQLKYVFLYFSWKQLQTSLRNLVPLLDYNNPELYLRRYIQVIRDRAFSLLFQYQSVFGESSNDRLNAAGTVDIPNSTSTSASPFEMDPEGFNNFGQNILSSFVRKLQLEICYVLQKFMPNVKDSTSKFSLLLQLYYCNQSLTKVGTDISIPLSKILGSEWLEMIHSQSSEKQA.

Belongs to the COG8 family. In terms of assembly, component of the conserved oligomeric Golgi complex which is composed of eight different subunits and is required for normal Golgi morphology and localization.

It is found in the golgi apparatus membrane. Required for normal Golgi function. This chain is Conserved oligomeric Golgi complex subunit 8 (cog8), found in Schizosaccharomyces pombe (strain 972 / ATCC 24843) (Fission yeast).